Here is a 471-residue protein sequence, read N- to C-terminus: Putative multidrug resistance protein MdtD (471 aa).

Residues 1-11 are Periplasmic-facing; sequence MTDLPDSTRWQ. The helical transmembrane segment at 12–32 threads the bilayer; that stretch reads LWIVAFGFFMQSLDTTIVNTA. Residues 33–48 are Cytoplasmic-facing; that stretch reads LPSMAQSLGESPLHMH. Residues 49 to 69 traverse the membrane as a helical segment; it reads MVIVSYVLTVAVMLPASGWLA. Over 70–76 the chain is Periplasmic; sequence DKVGVRN. The chain crosses the membrane as a helical span at residues 77-97; it reads IFFTAIVLFTLGSLFCALSGT. The Cytoplasmic segment spans residues 98 to 101; it reads LNEL. The chain crosses the membrane as a helical span at residues 102-124; it reads LLARALQGVGGAMMVPVGRLTVM. Over 125-137 the chain is Periplasmic; the sequence is KIVPREQYMAAMT. The chain crosses the membrane as a helical span at residues 138 to 158; it reads FVTLPGQVGPLLGPALGGLLV. Residues 159 to 164 are Cytoplasmic-facing; the sequence is EYASWH. The chain crosses the membrane as a helical span at residues 165 to 185; sequence WIFLINIPVGIIGAIATLMLM. The Periplasmic portion of the chain corresponds to 186 to 196; that stretch reads PNYTMQTRRFD. Residues 197–217 traverse the membrane as a helical segment; sequence LSGFLLLAVGMAVLTLALDGS. Topologically, residues 218-224 are cytoplasmic; it reads KGTGLSP. A helical membrane pass occupies residues 225–245; it reads LAIAGLVAVGVVALVLYLLHA. At 246–262 the chain is on the periplasmic side; the sequence is RNNNRALFSLKLFRTRT. A helical membrane pass occupies residues 263-283; the sequence is FSLGLAGSFAGRIGSGMLPFM. Residues 284–285 lie on the Cytoplasmic side of the membrane; sequence TP. The helical transmembrane segment at 286-306 threads the bilayer; the sequence is VFLQIGLGFSPFHAGLMMIPM. The Periplasmic portion of the chain corresponds to 307–341; it reads VLGSMGMKRIVVQVVNRFGYRRVLVATTLGLSLVT. Residues 342-362 traverse the membrane as a helical segment; it reads LLFMTTALLGWYYVLPFVLFL. Topologically, residues 363-395 are cytoplasmic; that stretch reads QGMVNSTRFSSMNTLTLKDLPDNLASSGNSLLS. The helical transmembrane segment at 396–416 threads the bilayer; that stretch reads MIMQLSMSIGVTIAGLLLGLF. Residues 417 to 430 lie on the Periplasmic side of the membrane; the sequence is GSQHVSIDSGTTQT. The chain crosses the membrane as a helical span at residues 431–451; it reads VFMYTWLSMALIIALPAFIFA. Topologically, residues 452–471 are cytoplasmic; it reads RVPNDTHQNVAISRRKRSAQ.

It belongs to the major facilitator superfamily. TCR/Tet family.

It is found in the cell inner membrane. This Escherichia coli (strain 55989 / EAEC) protein is Putative multidrug resistance protein MdtD.